The chain runs to 359 residues: MTGDLNEFVAHFWPVRVVFGAGSTERIPAEVKRLGARRALVLCTPDQRDLAQRVLGDLGDLGAGFHDGAVMHVPEASVTRAAQAARDADADLLVAVGGGSTIGLAKALALHHGMRFVALPTTYAGSEMTPIWGLTADGAKRTGRDPRVLPSTVLYDPHHLTSLPPEVTGPSGMNAIAHAVESMYAPDRNPITMLLAEESIRAMAQGLPVAVDSPGDLDARTRTLYAAWLAGTVLGMVSMGLHHKLCHVLGGRFNLPHAPMHAVLLPHVAAFNEVAAPAELGRVAAALGAPGPGGAGAALHALLRFTCTERSLAAIGMPAQGIYDAAEHALADAYANPRQASREDIARLLRAAFTGEMPA.

This sequence belongs to the iron-containing alcohol dehydrogenase family. In terms of assembly, homodimer.

It carries out the reaction 3-oxoadipate + NAD(+) = maleylacetate + NADH + H(+). It catalyses the reaction 3-oxoadipate + NADP(+) = maleylacetate + NADPH + H(+). The protein operates within aromatic compound metabolism; 3-chlorocatechol degradation. With respect to regulation, inhibited by p-chloromercuribenzoate and by 3-oxoadipate, and, in a temperature-dependent manner, by manganese. Its function is as follows. Plays a major role in the degradation of chloroaromatic compounds by channeling maleylacetate and some of its substituted derivatives into the 3-oxoadipate pathway. This enzyme converts maleylacetate and 2-chloromaleylacetate with similar efficiencies. NADH is preferred to NADPH as the cosubstrate. The chain is Maleylacetate reductase 2 (tfdFII) from Cupriavidus pinatubonensis (strain JMP 134 / LMG 1197) (Cupriavidus necator (strain JMP 134)).